The following is a 431-amino-acid chain: tRNA(Ile)-lysidine synthase (431 aa).

26–31 (SGGIDS) provides a ligand contact to ATP.

Belongs to the tRNA(Ile)-lysidine synthase family.

The protein localises to the cytoplasm. The enzyme catalyses cytidine(34) in tRNA(Ile2) + L-lysine + ATP = lysidine(34) in tRNA(Ile2) + AMP + diphosphate + H(+). In terms of biological role, ligates lysine onto the cytidine present at position 34 of the AUA codon-specific tRNA(Ile) that contains the anticodon CAU, in an ATP-dependent manner. Cytidine is converted to lysidine, thus changing the amino acid specificity of the tRNA from methionine to isoleucine. This chain is tRNA(Ile)-lysidine synthase, found in Wolbachia sp. subsp. Brugia malayi (strain TRS).